Consider the following 207-residue polypeptide: Putative transcriptional regulator (207 aa).

A Response regulatory domain is found at 3–118 (KVLIVDDHPA…ELLLAAKAVL (116 aa)). D9 and D53 each carry 4-aspartylphosphate. An HTH luxR-type domain is found at 140 to 205 (EARMLESLSD…GLIDFARRHE (66 aa)). Positions 155 to 174 (LQYLANGNTNKAIAQQLFLS) form a DNA-binding region, H-T-H motif.

In terms of biological role, probable transcriptional regulator. This is Putative transcriptional regulator from Pseudomonas aeruginosa (strain ATCC 15692 / DSM 22644 / CIP 104116 / JCM 14847 / LMG 12228 / 1C / PRS 101 / PAO1).